The following is a 299-amino-acid chain: Circadian clock oscillator protein KaiA (299 aa).

The KaiA N-terminal domain occupies 1–169; sequence MVSKLSLYLV…RLAEKLRERL (169 aa). The interval 3 to 135 is psR domain, binds oxidized quinones; that stretch reads SKLSLYLVTP…LHLAPSCALS (133 aa). The tract at residues 170–178 is flexible linker; it reads GYLGVYYKR. Residues 179 to 287 form the KaiA C-terminal domain; it reads NPKYFYRSLS…CEMYRRSIPR (109 aa).

Homodimer. The KaiABC complex composition changes during the circadian cycle to control KaiC phosphorylation. Complexes KaiC(6), KaiA(2-4):KaiC(6), KaiB(6):KaiC(6) and KaiC(6):KaiB(6):KaiA(12) are among the most important forms, many form cooperatively. KaiA and CikA bind to the same region of the KaiB(fs) form and therefore compete.

Functionally, key component of the KaiABC oscillator complex, which constitutes the main circadian regulator in cyanobacteria. Complex composition changes during the circadian cycle to control KaiC phosphorylation. KaiA stimulates KaiC autophosphorylation, while KaiB sequesters KaiA, leading to KaiC autodephosphorylation. KaiA binding to the KaiC CII domain during the subjective day yields KaiA(2-4):KaiC(6) complexes which stimulate KaiC autophosphorylation. Phospho-Ser-431 KaiC accumulation triggers binding of KaiB during the subjective night to form the KaiB(6):KaiC(6) complex, leading to changes in the output regulators CikA and SasA. KaiB(6):KaiC(6) formation exposes a site for KaiA binding on KaiB that sequesters KaiA from KaiC's CII domain, making the KaiC(6):KaiB(6):KaiA(12) complex resulting in KaiC autodephosphorylation. Complete dephosphorylation of KaiC leads to dissociation of KaiA(2):KaiB(1), completing 1 cycle of the Kai oscillator. Its function is as follows. Binds oxidized quinones via the N-terminal PsR domain, allowing it to sense redox changes and possibly mediate clock input. The chain is Circadian clock oscillator protein KaiA from Picosynechococcus sp. (strain ATCC 27264 / PCC 7002 / PR-6) (Agmenellum quadruplicatum).